The primary structure comprises 209 residues: Probable peptide export ATP-binding protein YydI (209 aa).

One can recognise an ABC transporter domain in the interval 1-207; it reads MNIANYTLKV…SVDKLIEVYI (207 aa). ATP is bound at residue 33 to 40; the sequence is GKNGVGKS.

It belongs to the ABC transporter superfamily. As to quaternary structure, the complex is composed of two ATP-binding proteins (YydI), two transmembrane proteins (YydJ).

In terms of biological role, suggested to be part of an ABC transporter complex YydIJ involved in export of the modified peptide YydF. Responsible for energy coupling to the transport system. The polypeptide is Probable peptide export ATP-binding protein YydI (yydI) (Bacillus subtilis (strain 168)).